Here is a 64-residue protein sequence, read N- to C-terminus: DNA gyrase inhibitor YacG (64 aa).

Residues Cys-9, Cys-12, Cys-28, and Cys-32 each coordinate Zn(2+).

The protein belongs to the DNA gyrase inhibitor YacG family. As to quaternary structure, interacts with GyrB. Requires Zn(2+) as cofactor.

Inhibits all the catalytic activities of DNA gyrase by preventing its interaction with DNA. Acts by binding directly to the C-terminal domain of GyrB, which probably disrupts DNA binding by the gyrase. The protein is DNA gyrase inhibitor YacG of Enterobacter sp. (strain 638).